A 620-amino-acid chain; its full sequence is Zinc metalloproteinase-disintegrin-like ACLD (620 aa).

The first 20 residues, 1–20 (MIQVLLVTLCLAVFPYQGSS), serve as a signal peptide directing secretion. Positions 21–189 (IILESGNVND…KKASQLNLTP (169 aa)) are excised as a propeptide. In terms of domain architecture, Peptidase M12B spans 199–395 (KYVEFVVVLD…RRPKCILNEP (197 aa)). E202 contributes to the Ca(2+) binding site. 2 N-linked (GlcNAc...) asparagine glycosylation sites follow: N259 and N265. A Ca(2+)-binding site is contributed by D286. 3 cysteine pairs are disulfide-bonded: C310–C390, C350–C374, and C352–C357. Residue H335 coordinates Zn(2+). E336 is an active-site residue. Zn(2+)-binding residues include H339 and H345. N-linked (GlcNAc...) asparagine glycosylation is present at N373. Ca(2+) contacts are provided by C390 and N393. N396 is a glycosylation site (N-linked (GlcNAc...) asparagine). Residues 403–489 (PPVCGNELLE…ECPTDRFQRN (87 aa)) form the Disintegrin domain. The Ca(2+) site is built by V405, N408, L410, E412, E415, and D418. 14 cysteine pairs are disulfide-bonded: C406/C435, C417/C430, C419/C425, C429/C452, C443/C449, C448/C474, C461/C481, C468/C500, C493/C505, C512/C562, C527/C573, C540/C550, C557/C599, and C593/C604. The short motif at 467 to 469 (DCD) is the D/ECD-tripeptide element. 2 N-linked (GlcNAc...) asparagine glycosylation sites follow: N502 and N536.

It belongs to the venom metalloproteinase (M12B) family. P-III subfamily. P-IIIa sub-subfamily. Monomer. Zn(2+) serves as cofactor. In terms of tissue distribution, expressed by the venom gland.

Its subcellular location is the secreted. With respect to regulation, inhibited by EDTA and O-phenanthroline. Not inhibited by PMSF, benzamidine, irreversible serine-proteinase inhibitors and cysteine proteinase inhibitor E-64. In terms of biological role, is a potent activator of prothrombin (F2). Does not elicit any hemorrhagic response. Barely inhibits collagen-induced platelet aggregation. Binds neither collagen, nor the jararhagin-monoclonal antibody MAJar3. Hydrolyzes the Aalpha-chain of fibrin and fibrinogen, without affecting the Bbeta- and gamma-chains. Is capable of triggering endothelial pro-inflammatory and procoagulant cell responses, but fails to trigger apoptosis. Induces von Willebrand factor release, and the expression of both ICAM1 and E-selectin (SELE) (without increase in VCAM1) in endothelial cells (HUVEC). Is also able to up-regulate the synthesis of the coagulation factor TF (F3). Enhances nitric oxide (NO) generation, prostacyclin production and interleukin-8 release. The sequence is that of Zinc metalloproteinase-disintegrin-like ACLD from Agkistrodon contortrix laticinctus (Broad-banded copperhead).